The primary structure comprises 440 residues: Adenylosuccinate synthetase (440 aa).

GTP-binding positions include 12–18 and 40–42; these read GDEGKGK and GHT. The active-site Proton acceptor is the Asp-13. Mg(2+) contacts are provided by Asp-13 and Gly-40. IMP-binding positions include 13–16, 38–41, Thr-128, Arg-142, Gln-223, Thr-238, and Arg-302; these read DEGK and NAGH. The Proton donor role is filled by His-41. Substrate is bound at residue 298–304; that stretch reads TTTGRPR. GTP contacts are provided by residues Arg-304, 330-332, and 412-414; these read KLD and SVG.

This sequence belongs to the adenylosuccinate synthetase family. Homodimer. It depends on Mg(2+) as a cofactor.

Its subcellular location is the cytoplasm. It catalyses the reaction IMP + L-aspartate + GTP = N(6)-(1,2-dicarboxyethyl)-AMP + GDP + phosphate + 2 H(+). Its pathway is purine metabolism; AMP biosynthesis via de novo pathway; AMP from IMP: step 1/2. Functionally, plays an important role in the de novo pathway of purine nucleotide biosynthesis. Catalyzes the first committed step in the biosynthesis of AMP from IMP. The protein is Adenylosuccinate synthetase of Gloeobacter violaceus (strain ATCC 29082 / PCC 7421).